We begin with the raw amino-acid sequence, 95 residues long: Protein TusB (95 aa).

This sequence belongs to the DsrH/TusB family. In terms of assembly, heterohexamer, formed by a dimer of trimers. The hexameric TusBCD complex contains 2 copies each of TusB, TusC and TusD. The TusBCD complex interacts with TusE.

The protein localises to the cytoplasm. Functionally, part of a sulfur-relay system required for 2-thiolation of 5-methylaminomethyl-2-thiouridine (mnm(5)s(2)U) at tRNA wobble positions. In Erwinia tasmaniensis (strain DSM 17950 / CFBP 7177 / CIP 109463 / NCPPB 4357 / Et1/99), this protein is Protein TusB.